Reading from the N-terminus, the 89-residue chain is Small ribosomal subunit protein uS17 (89 aa).

It belongs to the universal ribosomal protein uS17 family. Part of the 30S ribosomal subunit.

In terms of biological role, one of the primary rRNA binding proteins, it binds specifically to the 5'-end of 16S ribosomal RNA. This is Small ribosomal subunit protein uS17 from Ralstonia pickettii (strain 12J).